Consider the following 182-residue polypeptide: UPF0316 protein BCAH820_3389 (182 aa).

3 helical membrane-spanning segments follow: residues 6–26 (LIFVLQIIYVPILTIRTILLV), 32–52 (SAAAVGLLEGAIYIVSLGIVF), and 58–78 (WMNIVAYVIGFSAGLLLGGYI).

Belongs to the UPF0316 family.

The protein localises to the cell membrane. This Bacillus cereus (strain AH820) protein is UPF0316 protein BCAH820_3389.